The chain runs to 403 residues: 4-hydroxy-3-methylbut-2-enyl diphosphate reductase (403 aa).

Cys66 is a binding site for [4Fe-4S] cluster. His96 is a binding site for (2E)-4-hydroxy-3-methylbut-2-enyl diphosphate. His96 lines the dimethylallyl diphosphate pocket. His96 provides a ligand contact to isopentenyl diphosphate. A [4Fe-4S] cluster-binding site is contributed by Cys157. His185 lines the (2E)-4-hydroxy-3-methylbut-2-enyl diphosphate pocket. His185 is a binding site for dimethylallyl diphosphate. Residue His185 coordinates isopentenyl diphosphate. The Proton donor role is filled by Glu187. Residue Thr250 participates in (2E)-4-hydroxy-3-methylbut-2-enyl diphosphate binding. Cys288 is a binding site for [4Fe-4S] cluster. (2E)-4-hydroxy-3-methylbut-2-enyl diphosphate contacts are provided by Ser317, Ser318, Asn319, and Ser379. Residues Ser317, Ser318, Asn319, and Ser379 each coordinate dimethylallyl diphosphate. Positions 317, 318, 319, and 379 each coordinate isopentenyl diphosphate.

Belongs to the IspH family. Requires [4Fe-4S] cluster as cofactor.

The catalysed reaction is isopentenyl diphosphate + 2 oxidized [2Fe-2S]-[ferredoxin] + H2O = (2E)-4-hydroxy-3-methylbut-2-enyl diphosphate + 2 reduced [2Fe-2S]-[ferredoxin] + 2 H(+). It carries out the reaction dimethylallyl diphosphate + 2 oxidized [2Fe-2S]-[ferredoxin] + H2O = (2E)-4-hydroxy-3-methylbut-2-enyl diphosphate + 2 reduced [2Fe-2S]-[ferredoxin] + 2 H(+). The protein operates within isoprenoid biosynthesis; dimethylallyl diphosphate biosynthesis; dimethylallyl diphosphate from (2E)-4-hydroxy-3-methylbutenyl diphosphate: step 1/1. It functions in the pathway isoprenoid biosynthesis; isopentenyl diphosphate biosynthesis via DXP pathway; isopentenyl diphosphate from 1-deoxy-D-xylulose 5-phosphate: step 6/6. Its function is as follows. Catalyzes the conversion of 1-hydroxy-2-methyl-2-(E)-butenyl 4-diphosphate (HMBPP) into a mixture of isopentenyl diphosphate (IPP) and dimethylallyl diphosphate (DMAPP). Acts in the terminal step of the DOXP/MEP pathway for isoprenoid precursor biosynthesis. The polypeptide is 4-hydroxy-3-methylbut-2-enyl diphosphate reductase (Rippkaea orientalis (strain PCC 8801 / RF-1) (Cyanothece sp. (strain PCC 8801))).